Reading from the N-terminus, the 272-residue chain is Putative phosphoenolpyruvate synthase regulatory protein (272 aa).

Residue 152-159 (GVSRCGKT) participates in ADP binding.

It belongs to the pyruvate, phosphate/water dikinase regulatory protein family. PSRP subfamily.

The enzyme catalyses [pyruvate, water dikinase] + ADP = [pyruvate, water dikinase]-phosphate + AMP + H(+). It carries out the reaction [pyruvate, water dikinase]-phosphate + phosphate + H(+) = [pyruvate, water dikinase] + diphosphate. In terms of biological role, bifunctional serine/threonine kinase and phosphorylase involved in the regulation of the phosphoenolpyruvate synthase (PEPS) by catalyzing its phosphorylation/dephosphorylation. In Pseudomonas putida (strain W619), this protein is Putative phosphoenolpyruvate synthase regulatory protein.